We begin with the raw amino-acid sequence, 603 residues long: Elongation factor 4 (603 aa).

Positions 7–189 (SRIRNFSIIA…AIVQQVPPPA (183 aa)) constitute a tr-type G domain. Residues 19–24 (DHGKST) and 136–139 (NKID) contribute to the GTP site.

Belongs to the TRAFAC class translation factor GTPase superfamily. Classic translation factor GTPase family. LepA subfamily.

It is found in the cell inner membrane. The enzyme catalyses GTP + H2O = GDP + phosphate + H(+). Functionally, required for accurate and efficient protein synthesis under certain stress conditions. May act as a fidelity factor of the translation reaction, by catalyzing a one-codon backward translocation of tRNAs on improperly translocated ribosomes. Back-translocation proceeds from a post-translocation (POST) complex to a pre-translocation (PRE) complex, thus giving elongation factor G a second chance to translocate the tRNAs correctly. Binds to ribosomes in a GTP-dependent manner. In Synechocystis sp. (strain ATCC 27184 / PCC 6803 / Kazusa), this protein is Elongation factor 4.